Here is a 496-residue protein sequence, read N- to C-terminus: ATP synthase subunit beta, chloroplastic (496 aa).

170 to 177 (GGAGVGKT) is a binding site for ATP.

This sequence belongs to the ATPase alpha/beta chains family. As to quaternary structure, F-type ATPases have 2 components, CF(1) - the catalytic core - and CF(0) - the membrane proton channel. CF(1) has five subunits: alpha(3), beta(3), gamma(1), delta(1), epsilon(1). CF(0) has four main subunits: a(1), b(1), b'(1) and c(9-12).

It localises to the plastid. The protein localises to the chloroplast thylakoid membrane. It carries out the reaction ATP + H2O + 4 H(+)(in) = ADP + phosphate + 5 H(+)(out). Functionally, produces ATP from ADP in the presence of a proton gradient across the membrane. The catalytic sites are hosted primarily by the beta subunits. In Dioscorea elephantipes (Elephant's foot yam), this protein is ATP synthase subunit beta, chloroplastic.